Reading from the N-terminus, the 716-residue chain is Hepatocyte growth factor-like protein (716 aa).

Positions 1-18 (MGWLPLLLLLVQCSRALG) are cleaved as a signal peptide. Residues 19-105 (QRSPLNDFQL…SLCHLFQKKD (87 aa)) enclose the PAN domain. Disulfide bonds link Cys-56-Cys-78, Cys-60-Cys-66, Cys-110-Cys-186, Cys-131-Cys-169, Cys-157-Cys-181, Cys-191-Cys-268, Cys-194-Cys-333, Cys-212-Cys-251, Cys-240-Cys-263, Cys-292-Cys-370, Cys-313-Cys-352, Cys-341-Cys-364, Cys-379-Cys-457, Cys-400-Cys-440, Cys-428-Cys-452, Cys-477-Cys-593, Cys-512-Cys-528, Cys-607-Cys-672, Cys-637-Cys-651, and Cys-662-Cys-690. N-linked (GlcNAc...) asparagine glycosylation is present at Asn-72. 4 consecutive Kringle domains span residues 110-186 (CIMD…IKTC), 191-268 (CVLC…LPSC), 292-370 (CFRG…IPRC), and 379-457 (CYHG…LQRC). N-linked (GlcNAc...) asparagine glycosylation is present at Asn-173. Residue Asn-305 is glycosylated (N-linked (GlcNAc...) asparagine). One can recognise a Peptidase S1 domain in the interval 489–714 (VVGGHPGNSP…FVDWINKVMQ (226 aa)). N-linked (GlcNAc...) asparagine glycosylation is present at Asn-620.

This sequence belongs to the peptidase S1 family. Plasminogen subfamily. Dimer of an alpha chain and a beta chain linked by a disulfide bond. Interacts (via beta chain) with MST1R (via SEMA domain). Post-translationally, cleaved after Arg-488, probably by HPN/Hepsin, to yield the active form consisting of two disulfide-linked chains. Liver. Lower levels in lung, placenta and adrenal.

The protein resides in the secreted. The chain is Hepatocyte growth factor-like protein (Mst1) from Mus musculus (Mouse).